The following is a 100-amino-acid chain: MTNRMELSGTIAKPPIRSKSPGGIEHCRFWLEHRSTVIEADLPRQVYCRMPVVVSGLRSQAITQNLVQGSNIKVSGFVAYQTGRNGVGKLVLHADNITQI.

Positions 1–100 (MTNRMELSGT…VLHADNITQI (100 aa)) constitute an SSB domain.

Belongs to the PriB family. As to quaternary structure, homodimer. Interacts with PriA and DnaT. Component of the replication restart primosome. Primosome assembly occurs via a 'hand-off' mechanism. PriA binds to replication forks, subsequently PriB then DnaT bind; DnaT then displaces ssDNA to generate the helicase loading substrate.

Its function is as follows. Involved in the restart of stalled replication forks, which reloads the replicative helicase on sites other than the origin of replication; the PriA-PriB pathway is the major replication restart pathway. During primosome assembly it facilitates complex formation between PriA and DnaT on DNA; stabilizes PriA on DNA. Stimulates the DNA unwinding activity of PriA helicase. This is Replication restart protein PriB from Vibrio parahaemolyticus serotype O3:K6 (strain RIMD 2210633).